The sequence spans 79 residues: Moronecidin (79 aa).

The signal sequence occupies residues 1–22; it reads MKCATLSLVLSMVVLMAEPGDA. A Glycine amide modification is found at Gly-44. Positions 45-68 are disordered; it reads GKAEQDQQDQQYQQDQQDQQAQQY. The propeptide occupies 47–79; that stretch reads AEQDQQDQQYQQDQQDQQAQQYQRFNRERAAFD. Over residues 52-68 the composition is skewed to low complexity; the sequence is QDQQYQQDQQDQQAQQY.

In terms of tissue distribution, expressed in gill, skin, intestine, spleen, anterior kidney, and blood cells.

Its subcellular location is the secreted. In terms of biological role, antimicrobial peptide with broad-spectrum activity against Gram-positive and Gram-negative bacteria as well as against a variety of fungi. Rapidly inactivates both channel catfish herpesvirus (ED(50)=4 uM) and frog virus 3 (ED(50)=13 uM) over a wide temperature range. Seems to disrupt the membranes by adopting an alpha helical conformation. The sequence is that of Moronecidin from Morone chrysops (White bass).